We begin with the raw amino-acid sequence, 70 residues long: DNA-directed RNA polymerase subunit omega (70 aa).

The protein belongs to the RNA polymerase subunit omega family. The RNAP catalytic core consists of 2 alpha, 1 beta, 1 beta' and 1 omega subunit. When a sigma factor is associated with the core the holoenzyme is formed, which can initiate transcription.

It catalyses the reaction RNA(n) + a ribonucleoside 5'-triphosphate = RNA(n+1) + diphosphate. In terms of biological role, promotes RNA polymerase assembly. Latches the N- and C-terminal regions of the beta' subunit thereby facilitating its interaction with the beta and alpha subunits. This is DNA-directed RNA polymerase subunit omega from Staphylococcus epidermidis (strain ATCC 12228 / FDA PCI 1200).